Here is a 325-residue protein sequence, read N- to C-terminus: Putative metal ion transporter ZIPCO (325 aa).

3 helical membrane passes run 5–25 (TFLA…PAYI), 46–66 (IASG…VIIL), and 74–94 (LYYI…TDIL). N-linked (GlcNAc...) asparagine glycosylation is found at Asn106 and Asn160. 4 consecutive transmembrane segments (helical) span residues 179 to 199 (FFIV…MGSL), 239 to 259 (IYAW…IFSF), 264 to 284 (FVEI…SFNM), and 296 to 316 (HFIS…MILF).

The protein localises to the cytoplasmic vesicle membrane. Functionally, putative transporter for the divalent zinc and iron cations. In Plasmodium falciparum (isolate 3D7), this protein is Putative metal ion transporter ZIPCO.